The sequence spans 328 residues: dITP/XTP pyrophosphatase (328 aa).

The tract at residues 1-129 (MSEKIYEYKD…ATSEQGFGDT (129 aa)) is unknown. Positions 130–324 (ILIATRNEGK…KLMEVFPAWQ (195 aa)) are NTP pyrophosphatase. 134-139 (TRNEGK) contributes to the substrate binding site. The Proton acceptor role is filled by Asp196. Asp196 provides a ligand contact to Mg(2+). Substrate-binding positions include Ser197, 280–283 (FGYD), Lys303, and 308–309 (HR).

The protein belongs to the HAM1 NTPase family. In terms of assembly, homodimer. Mg(2+) serves as cofactor.

It carries out the reaction XTP + H2O = XMP + diphosphate + H(+). The enzyme catalyses dITP + H2O = dIMP + diphosphate + H(+). The catalysed reaction is ITP + H2O = IMP + diphosphate + H(+). Its function is as follows. Pyrophosphatase that catalyzes the hydrolysis of nucleoside triphosphates to their monophosphate derivatives, with a high preference for the non-canonical purine nucleotides XTP (xanthosine triphosphate), dITP (deoxyinosine triphosphate) and ITP. Seems to function as a house-cleaning enzyme that removes non-canonical purine nucleotides from the nucleotide pool, thus preventing their incorporation into DNA/RNA and avoiding chromosomal lesions. The chain is dITP/XTP pyrophosphatase from Streptococcus pyogenes serotype M6 (strain ATCC BAA-946 / MGAS10394).